A 320-amino-acid chain; its full sequence is MDDDDDTSFNNSLDLYCDEDPFDSTPPPPPPPPEQQQQAGTTTPDDIDDEVMEYYKAKQRCYALQIRDYCCYLQCHHLLLQQQQHGVAAARLKAAMGRLGLEAATAFNAANYLDRFLSINCHLKWEEWMVEVVSVGCLSLACKLDEVTIPSLHDLQMEEAMGHSFRASTIRDMELTLLKALRWRLACVTPFSFLPVTTTTTTTRALLLRSLLDPSFLRFDASLLAASALTLSSTTPQHPNHLLLNRLIHPFSQTDHEVKECFNMMKALHLDMSKNPGRSSDHPCWSPISVVIPFHTDGTVKRSAISRCLFGSGRLKARSI.

A disordered region spans residues 1–46; that stretch reads MDDDDDTSFNNSLDLYCDEDPFDSTPPPPPPPPEQQQQAGTTTPDD. Residues 24 to 34 are compositionally biased toward pro residues; that stretch reads STPPPPPPPPE. The segment covering 35-44 has biased composition (low complexity); it reads QQQQAGTTTP.

It belongs to the cyclin family. Cyclin D subfamily.

The sequence is that of Putative cyclin-D7-1 (CYCD7-1) from Oryza sativa subsp. japonica (Rice).